The following is a 282-amino-acid chain: Pantothenate synthetase (282 aa).

An ATP-binding site is contributed by 30–37 (MGYLHEGH). Catalysis depends on His37, which acts as the Proton donor. Gln61 provides a ligand contact to (R)-pantoate. Residue Gln61 coordinates beta-alanine. Residue 147 to 150 (GMKD) coordinates ATP. Gln153 serves as a coordination point for (R)-pantoate. ATP is bound by residues Val176 and 184-187 (KSSR).

The protein belongs to the pantothenate synthetase family. Homodimer.

Its subcellular location is the cytoplasm. It carries out the reaction (R)-pantoate + beta-alanine + ATP = (R)-pantothenate + AMP + diphosphate + H(+). It participates in cofactor biosynthesis; (R)-pantothenate biosynthesis; (R)-pantothenate from (R)-pantoate and beta-alanine: step 1/1. Its function is as follows. Catalyzes the condensation of pantoate with beta-alanine in an ATP-dependent reaction via a pantoyl-adenylate intermediate. In Bacillus thuringiensis (strain Al Hakam), this protein is Pantothenate synthetase.